We begin with the raw amino-acid sequence, 414 residues long: Patatin-like protein 1 (414 aa).

The PNPLA domain occupies 20–224 (LAIDGGGIRG…AANNPTMVAM (205 aa)). The GXGXXG signature appears at 24 to 29 (GGGIRG). The GXSXG motif lies at 62–66 (GTSTG). S64 serves as the catalytic Nucleophile. D211 serves as the catalytic Proton acceptor. Positions 211–213 (DGG) match the DGA/G motif.

This sequence belongs to the patatin family.

Its function is as follows. Possesses non-specific lipolytic acyl hydrolase (LAH) activity. Hydrolyzes phospholipids as well as galactolipids. May play a role in disease resistance. The sequence is that of Patatin-like protein 1 (PLP1) from Oryza sativa subsp. indica (Rice).